The following is a 242-amino-acid chain: Probable transcriptional regulatory protein Bcen2424_2294 (242 aa).

This sequence belongs to the TACO1 family.

It is found in the cytoplasm. The polypeptide is Probable transcriptional regulatory protein Bcen2424_2294 (Burkholderia cenocepacia (strain HI2424)).